The primary structure comprises 308 residues: Growth/differentiation factor 15 (308 aa).

The N-terminal stretch at 1–29 is a signal peptide; sequence MPGQELKTLNGSQMLLVLLVLLWPPHGGA. Positions 30 to 192 are excised as a propeptide; that stretch reads VSLAEASRAS…HLRPRASRGR (163 aa). The N-linked (GlcNAc...) asparagine glycan is linked to asparagine 70. Residues 152 to 179 form a disordered region; sequence APALHLRLSPPPSQSDQLLVKSSSSRPQ. A compositionally biased stretch (polar residues) spans 165-178; sequence QSDQLLVKSSSSRP. Intrachain disulfides connect cysteine 203–cysteine 210, cysteine 211–cysteine 274, cysteine 240–cysteine 305, and cysteine 244–cysteine 307.

The protein belongs to the TGF-beta family. Homodimer; disulfide-linked. Interacts with GFRAL and RET; ligand of GFRAL, which mediates GDF15 internalization and cellular signaling through interaction with RET via the formation of a 2:2:2 ternary complex composed of GDF15, GFRAL and RET. As to expression, detected in plasma (at protein level).

It localises to the secreted. Hormone produced in response to various stresses to confer information about those stresses to the brain, and trigger an aversive response, characterized by nausea and/or loss of appetite. The aversive response is both required to reduce continuing exposure to those stresses at the time of exposure and to promote avoidance behavior in the future. Acts by binding to its receptor, GFRAL, activating GFRAL-expressing neurons localized in the area postrema and nucleus tractus solitarius of the brainstem. It then triggers the activation of neurons localized within the parabrachial nucleus and central amygdala, which constitutes part of the 'emergency circuit' that shapes responses to stressful conditions. The GDF15-GFRAL signal induces expression of genes involved in metabolism, such as lipid metabolism in adipose tissues. Required for avoidance behavior in response to food allergens: induced downstream of mast cell activation to promote aversion and minimize harmful effects of exposure to noxious substances. In addition to suppress appetite, also promotes weight loss by enhancing energy expenditure in muscle: acts by increasing calcium futile cycling in muscle. Contributes to the effect of metformin, an anti-diabetic drug, on appetite reduction and weight loss: produced in the kidney in response to metformin treatment, thereby activating the GDF15-GFRAL response, leading to reduced appetite and weight. Produced in response to anticancer drugs, such as camptothecin or cisplatin, promoting nausea and contributing to malnutrition. Overproduced in many cancers, promoting anorexia in cancer (cachexia). Responsible for the risk of nausea during pregnancy: high levels of GDF15 during pregnancy, mostly originating from embryos, are associated with increased nausea. Maternal sensitivity to nausea is probably determined by pre-pregnancy exposure to GDF15, females with naturally high level of GDF15 being less susceptible to nausea than females with low levels of GDF15 before pregnancy. Promotes metabolic adaptation in response to systemic inflammation caused by bacterial and viral infections in order to promote tissue tolerance and prevent tissue damage. Inhibits growth hormone signaling on hepatocytes. This is Growth/differentiation factor 15 from Macaca fascicularis (Crab-eating macaque).